Consider the following 626-residue polypeptide: Phosphomethylpyrimidine synthase (626 aa).

Residues Asn237, Met266, Tyr295, His331, Ser351–Gly353, Asp392–Arg395, and Glu431 each bind substrate. His435 is a Zn(2+) binding site. Tyr458 is a binding site for substrate. A Zn(2+)-binding site is contributed by His499. 3 residues coordinate [4Fe-4S] cluster: Cys579, Cys582, and Cys587.

Belongs to the ThiC family. In terms of assembly, homodimer. [4Fe-4S] cluster serves as cofactor.

The enzyme catalyses 5-amino-1-(5-phospho-beta-D-ribosyl)imidazole + S-adenosyl-L-methionine = 4-amino-2-methyl-5-(phosphooxymethyl)pyrimidine + CO + 5'-deoxyadenosine + formate + L-methionine + 3 H(+). It participates in cofactor biosynthesis; thiamine diphosphate biosynthesis. In terms of biological role, catalyzes the synthesis of the hydroxymethylpyrimidine phosphate (HMP-P) moiety of thiamine from aminoimidazole ribotide (AIR) in a radical S-adenosyl-L-methionine (SAM)-dependent reaction. This is Phosphomethylpyrimidine synthase from Cupriavidus necator (strain ATCC 17699 / DSM 428 / KCTC 22496 / NCIMB 10442 / H16 / Stanier 337) (Ralstonia eutropha).